Here is a 119-residue protein sequence, read N- to C-terminus: MARFVVVALLVQLSLFGLEAIQHPPKIQVYSRYPADNGKPNFLNCYVSGFHPSDIEVDLLKNGKKIEKVEHSDLSFSKDWSFYLLYYTEFTPNEKDEYACRVSHVTFSTPKTVKWDRNM.

A signal peptide spans 1–20 (MARFVVVALLVQLSLFGLEA). Positions 25-114 (PKIQVYSRYP…VTFSTPKTVK (90 aa)) constitute an Ig-like C1-type domain. Cysteines 45 and 100 form a disulfide.

The protein belongs to the beta-2-microglobulin family. Heterodimer of an alpha chain and a beta chain. Beta-2-microglobulin is the beta-chain of major histocompatibility complex class I molecules.

It localises to the secreted. Functionally, component of the class I major histocompatibility complex (MHC). Involved in the presentation of peptide antigens to the immune system. This chain is Beta-2-microglobulin (B2M), found in Saguinus imperator (Emperor tamarin).